Here is a 343-residue protein sequence, read N- to C-terminus: Protein SOSEKI 4 (343 aa).

The segment at 18-109 (RIVPVVYYLS…YVLKGSQILD (92 aa)) is DIX-like oligomerization domain. Positions 148-194 (RKLSMDASTQTDDRRRRKSPVDEVNEVTELSREEITSPPQSDSSPET) are disordered. A compositionally biased stretch (polar residues) spans 184-194 (SPPQSDSSPET). The short motif at 233–234 (CG) is the Association to cell membranes element.

It belongs to the SOSEKI family. In terms of assembly, homodimer. Forms long polymer filaments with other SOKs proteins polymers (e.g. SOK1, SOK2, SOK3 and SOK4) crucial for polar localization and biological activity. Binds to ANGUSTIFOLIA (AN). Expressed during embryogenesis and in roots.

It localises to the cell membrane. SOSEKI proteins (SOK1-5) locally interpret global polarity cues and can influence cell division orientation to coordinate cell polarization relative to body axes, probably by guiding ANGUSTIFOLIA (AN) polarized localization. Positive regulator of auxin (indole-3-acetic acid, IAA) biosynthesis and signaling pathway leading to the modulation of seedling growth, plant and inflorescence development. Negative regulator of stress responses (e.g. salinity and osmotic stress). This is Protein SOSEKI 4 from Arabidopsis thaliana (Mouse-ear cress).